We begin with the raw amino-acid sequence, 104 residues long: Replication restart protein PriB (104 aa).

The SSB domain maps to Met1–Asp101.

The protein belongs to the PriB family. Homodimer. Interacts with PriA and DnaT. Component of the replication restart primosome. Primosome assembly occurs via a 'hand-off' mechanism. PriA binds to replication forks, subsequently PriB then DnaT bind; DnaT then displaces ssDNA to generate the helicase loading substrate.

Functionally, involved in the restart of stalled replication forks, which reloads the replicative helicase on sites other than the origin of replication; the PriA-PriB pathway is the major replication restart pathway. During primosome assembly it facilitates complex formation between PriA and DnaT on DNA; stabilizes PriA on DNA. Stimulates the DNA unwinding activity of PriA helicase. This chain is Replication restart protein PriB, found in Enterobacter sp. (strain 638).